We begin with the raw amino-acid sequence, 509 residues long: Maturase K (509 aa).

It belongs to the intron maturase 2 family. MatK subfamily.

It is found in the plastid. Its subcellular location is the chloroplast. Its function is as follows. Usually encoded in the trnK tRNA gene intron. Probably assists in splicing its own and other chloroplast group II introns. The polypeptide is Maturase K (Chamaecyparis obtusa (Hinoki false-cypress)).